We begin with the raw amino-acid sequence, 289 residues long: 4-hydroxy-3-methylbut-2-enyl diphosphate reductase (289 aa).

C12 is a binding site for [4Fe-4S] cluster. (2E)-4-hydroxy-3-methylbut-2-enyl diphosphate is bound by residues H44 and H81. Residues H44 and H81 each coordinate dimethylallyl diphosphate. The isopentenyl diphosphate site is built by H44 and H81. C103 contacts [4Fe-4S] cluster. H130 contributes to the (2E)-4-hydroxy-3-methylbut-2-enyl diphosphate binding site. Dimethylallyl diphosphate is bound at residue H130. H130 contacts isopentenyl diphosphate. Catalysis depends on E132, which acts as the Proton donor. Residue T174 participates in (2E)-4-hydroxy-3-methylbut-2-enyl diphosphate binding. C202 serves as a coordination point for [4Fe-4S] cluster. The (2E)-4-hydroxy-3-methylbut-2-enyl diphosphate site is built by S230, N232, and S273. The dimethylallyl diphosphate site is built by S230, N232, and S273. Isopentenyl diphosphate contacts are provided by S230, N232, and S273.

It belongs to the IspH family. [4Fe-4S] cluster serves as cofactor.

The catalysed reaction is isopentenyl diphosphate + 2 oxidized [2Fe-2S]-[ferredoxin] + H2O = (2E)-4-hydroxy-3-methylbut-2-enyl diphosphate + 2 reduced [2Fe-2S]-[ferredoxin] + 2 H(+). The enzyme catalyses dimethylallyl diphosphate + 2 oxidized [2Fe-2S]-[ferredoxin] + H2O = (2E)-4-hydroxy-3-methylbut-2-enyl diphosphate + 2 reduced [2Fe-2S]-[ferredoxin] + 2 H(+). Its pathway is isoprenoid biosynthesis; dimethylallyl diphosphate biosynthesis; dimethylallyl diphosphate from (2E)-4-hydroxy-3-methylbutenyl diphosphate: step 1/1. It participates in isoprenoid biosynthesis; isopentenyl diphosphate biosynthesis via DXP pathway; isopentenyl diphosphate from 1-deoxy-D-xylulose 5-phosphate: step 6/6. Functionally, catalyzes the conversion of 1-hydroxy-2-methyl-2-(E)-butenyl 4-diphosphate (HMBPP) into a mixture of isopentenyl diphosphate (IPP) and dimethylallyl diphosphate (DMAPP). Acts in the terminal step of the DOXP/MEP pathway for isoprenoid precursor biosynthesis. The sequence is that of 4-hydroxy-3-methylbut-2-enyl diphosphate reductase from Treponema denticola (strain ATCC 35405 / DSM 14222 / CIP 103919 / JCM 8153 / KCTC 15104).